Here is a 2641-residue protein sequence, read N- to C-terminus: CCR4-NOT transcription complex subunit let-711 (2641 aa).

The LXXLL motif lies at 660–664 (LSELL). 5 disordered regions span residues 771-887 (SGRS…QNAQ), 936-963 (TQRQ…PQQQ), 1197-1221 (EGGR…PAAA), 1518-1565 (QSKI…SQGA), and 2034-2054 (GMNN…AGLQ). Composition is skewed to low complexity over residues 774-795 (SSSV…QQQQ), 802-839 (LPPS…SQQQ), and 853-877 (PAQF…HMMG). Positions 951–960 (PQRPSGPPTP) are enriched in pro residues. A compositionally biased stretch (low complexity) spans 1205–1221 (GSAQAGSASSTPTPAAA). A compositionally biased stretch (low complexity) spans 2034–2046 (GMNNAMNNGAGNA). An LXXLL motif is present at residues 2341–2345 (LRVLL). The segment at 2609-2641 (AQGSQPQAQPDGAPGPLGNNTGAANQQQNPNTN) is disordered.

Belongs to the CNOT1 family. Component of the CCR4-NOT complex at least composed of ccf-1, ccr-4 and let-711, which is required for germ cell development in hermaphrodites. Within the complex interacts with ccf-1 and ccr-4; the interactions are direct. Highly expressed in the germline of hermaphrodites.

It is found in the nucleus. Scaffolding component of the CCR4-NOT complex which is one of the major cellular mRNA deadenylases and is linked to various cellular processes including bulk mRNA degradation, miRNA-mediated repression, translational repression during translational initiation and general transcription regulation. Positively regulates the accumulation of the CCR4-NOT complex component ccr-1. Within the complex promotes germ cell development and fertility in hermaphrodites. Additional complex functions may be a consequence of its influence on mRNA expression. Its scaffolding function implies its interaction with the catalytic complex module and diverse RNA-binding proteins mediating the complex recruitment to selected mRNA 3'UTRs. Mediates the recruitment of the CCR4-NOT complex to miRNA targets and to the RISC complex. Acts as a transcriptional repressor. Represses the ligand-dependent transcriptional activation by nuclear receptors. In embryos, plays a role in female pronucleus and mitotic spindle positioning during the first cleavage divisions after fertilization. This may partly be through negatively regulating the accumulation of zyg-9 at the centrosome. Negatively regulates the formation of long astral microtubules in developing embryos. Required for the stabilization and degradation of maternal mRNAs such as nos-2 in somatic blastomeres. The chain is CCR4-NOT transcription complex subunit let-711 from Caenorhabditis elegans.